The following is a 209-amino-acid chain: Superoxide dismutase [Mn/Fe] (209 aa).

The Fe(3+) site is built by histidine 38, histidine 90, aspartate 172, and histidine 176. Mn(2+) contacts are provided by histidine 38, histidine 90, aspartate 172, and histidine 176.

Belongs to the iron/manganese superoxide dismutase family. Mn(2+) serves as cofactor. Requires Fe(3+) as cofactor.

It catalyses the reaction 2 superoxide + 2 H(+) = H2O2 + O2. Its function is as follows. Destroys superoxide anion radicals which are normally produced within the cells and which are toxic to biological systems. Catalyzes the dismutation of superoxide anion radicals into O2 and H2O2 by successive reduction and oxidation of the transition metal ion at the active site. This Rickettsia typhi (strain ATCC VR-144 / Wilmington) protein is Superoxide dismutase [Mn/Fe] (sodB).